The primary structure comprises 326 residues: tRNA-modifying protein YgfZ (326 aa).

Residues tryptophan 27 and tryptophan 189 each contribute to the folate site.

It belongs to the tRNA-modifying YgfZ family.

The protein localises to the cytoplasm. Folate-binding protein involved in regulating the level of ATP-DnaA and in the modification of some tRNAs. It is probably a key factor in regulatory networks that act via tRNA modification, such as initiation of chromosomal replication. This chain is tRNA-modifying protein YgfZ, found in Shigella boydii serotype 18 (strain CDC 3083-94 / BS512).